The chain runs to 122 residues: Cytochrome b-c1 complex subunit 7-1, mitochondrial (122 aa).

This sequence belongs to the UQCRB/QCR7 family. Component of the ubiquinol-cytochrome c oxidoreductase (cytochrome b-c1 complex, complex III, CIII), a multisubunit enzyme composed of 10 subunits. The complex is composed of 3 respiratory subunits cytochrome b (MT-CYB), cytochrome c1 (CYC1-1 or CYC1-2) and Rieske protein (UCR1-1 or UCR1-2), 2 core protein subunits MPPalpha1 (or MPPalpha2) and MPPB, and 5 low-molecular weight protein subunits QCR7-1 (or QCR7-2), UCRQ-1 (or UCRQ-2), QCR9, UCRY and probably QCR6-1 (or QCR6-2). The complex exists as an obligatory dimer and forms supercomplexes (SCs) in the inner mitochondrial membrane with NADH-ubiquinone oxidoreductase (complex I, CI), resulting in different assemblies (supercomplexes SCI(1)III(2) and SCI(2)III(4)).

Its subcellular location is the mitochondrion inner membrane. In terms of biological role, component of the ubiquinol-cytochrome c oxidoreductase, a multisubunit transmembrane complex that is part of the mitochondrial electron transport chain which drives oxidative phosphorylation. The respiratory chain contains 3 multisubunit complexes succinate dehydrogenase (complex II, CII), ubiquinol-cytochrome c oxidoreductase (cytochrome b-c1 complex, complex III, CIII) and cytochrome c oxidase (complex IV, CIV), that cooperate to transfer electrons derived from NADH and succinate to molecular oxygen, creating an electrochemical gradient over the inner membrane that drives transmembrane transport and the ATP synthase. The cytochrome b-c1 complex catalyzes electron transfer from ubiquinol to cytochrome c, linking this redox reaction to translocation of protons across the mitochondrial inner membrane, with protons being carried across the membrane as hydrogens on the quinol. In the process called Q cycle, 2 protons are consumed from the matrix, 4 protons are released into the intermembrane space and 2 electrons are passed to cytochrome c. This Arabidopsis thaliana (Mouse-ear cress) protein is Cytochrome b-c1 complex subunit 7-1, mitochondrial (QCR7-1).